We begin with the raw amino-acid sequence, 1390 residues long: DNA-directed RNA polymerase subunit beta (1390 aa).

The protein belongs to the RNA polymerase beta chain family. In terms of assembly, the RNAP catalytic core consists of 2 alpha, 1 beta, 1 beta' and 1 omega subunit. When a sigma factor is associated with the core the holoenzyme is formed, which can initiate transcription.

The catalysed reaction is RNA(n) + a ribonucleoside 5'-triphosphate = RNA(n+1) + diphosphate. In terms of biological role, DNA-dependent RNA polymerase catalyzes the transcription of DNA into RNA using the four ribonucleoside triphosphates as substrates. This is DNA-directed RNA polymerase subunit beta from Mycoplasma genitalium (strain ATCC 33530 / DSM 19775 / NCTC 10195 / G37) (Mycoplasmoides genitalium).